A 107-amino-acid chain; its full sequence is Phosphoribosyl-ATP pyrophosphatase (107 aa).

This sequence belongs to the PRA-PH family.

Its subcellular location is the cytoplasm. The catalysed reaction is 1-(5-phospho-beta-D-ribosyl)-ATP + H2O = 1-(5-phospho-beta-D-ribosyl)-5'-AMP + diphosphate + H(+). The protein operates within amino-acid biosynthesis; L-histidine biosynthesis; L-histidine from 5-phospho-alpha-D-ribose 1-diphosphate: step 2/9. The sequence is that of Phosphoribosyl-ATP pyrophosphatase from Azoarcus sp. (strain BH72).